We begin with the raw amino-acid sequence, 354 residues long: Protein RecA (354 aa).

ATP is bound at residue 75–82 (GPESSGKT).

Belongs to the RecA family.

It is found in the cytoplasm. Functionally, can catalyze the hydrolysis of ATP in the presence of single-stranded DNA, the ATP-dependent uptake of single-stranded DNA by duplex DNA, and the ATP-dependent hybridization of homologous single-stranded DNAs. It interacts with LexA causing its activation and leading to its autocatalytic cleavage. The polypeptide is Protein RecA (Cupriavidus taiwanensis (strain DSM 17343 / BCRC 17206 / CCUG 44338 / CIP 107171 / LMG 19424 / R1) (Ralstonia taiwanensis (strain LMG 19424))).